We begin with the raw amino-acid sequence, 113 residues long: U11-theraphotoxin-Hhn1a (113 aa).

Residues 1–21 (MNTVRVTFLLVFVLPVSLGQA) form the signal peptide. Positions 22 to 74 (DKDENRMEMQEKTEQGKSYLDFAENLLLQKLEELEAKLLEEDSEESRNSRQKR) are excised as a propeptide. The segment covering 60 to 69 (LEEDSEESRN) has biased composition (basic and acidic residues). Residues 60–83 (LEEDSEESRNSRQKRCIGEGVPCD) are disordered. Disulfide bonds link Cys75–Cys90, Cys82–Cys95, and Cys89–Cys110.

This sequence belongs to the neurotoxin 14 (magi-1) family. 01 (HNTX-16) subfamily. In terms of tissue distribution, expressed by the venom gland.

Its subcellular location is the secreted. In terms of biological role, probable ion channel inhibitor. This is U11-theraphotoxin-Hhn1a from Cyriopagopus hainanus (Chinese bird spider).